The primary structure comprises 674 residues: Probable potassium transport system protein Kup (674 aa).

12 helical membrane-spanning segments follow: residues 7–27 (IFWG…TSPL), 52–72 (LSLV…LIAL), 95–115 (WLIL…TLTP), 145–165 (LVTF…TSFI), 169–189 (FGPL…VNLI), 204–224 (LMLL…SVFL), 244–264 (IYLT…GQGA), 291–311 (VYLF…QALI), 342–362 (IYIR…LVYF), 368–388 (MEAA…ILLS), 397–417 (VVFN…FLIS), and 425–445 (GGYV…IWYF).

The protein belongs to the HAK/KUP transporter (TC 2.A.72) family.

The protein resides in the cell membrane. The enzyme catalyses K(+)(in) + H(+)(in) = K(+)(out) + H(+)(out). Transport of potassium into the cell. Likely operates as a K(+):H(+) symporter. The chain is Probable potassium transport system protein Kup from Ligilactobacillus salivarius (strain UCC118) (Lactobacillus salivarius).